The primary structure comprises 168 residues: Cell division inhibitor SulA (168 aa).

A ftsZ binding region spans residues 106–112; sequence ALLTGNY. Positions 161–168 are lon protease binding; that stretch reads KIHSSLYH.

Belongs to the SulA family. In terms of assembly, interacts with FtsZ. Post-translationally, is rapidly cleaved and degraded by the Lon protease once DNA damage is repaired.

Functionally, component of the SOS system and an inhibitor of cell division. Accumulation of SulA causes rapid cessation of cell division and the appearance of long, non-septate filaments. In the presence of GTP, binds a polymerization-competent form of FtsZ in a 1:1 ratio, thus inhibiting FtsZ polymerization and therefore preventing it from participating in the assembly of the Z ring. This mechanism prevents the premature segregation of damaged DNA to daughter cells during cell division. This is Cell division inhibitor SulA from Serratia proteamaculans (strain 568).